A 101-amino-acid chain; its full sequence is NAD(P)H-quinone oxidoreductase subunit 4L, chloroplastic (101 aa).

3 helical membrane passes run 2–22, 32–52, and 61–81; these read MFEY…YGLI, MCLE…SDLF, and IFSI…PAIV.

This sequence belongs to the complex I subunit 4L family. As to quaternary structure, NDH is composed of at least 16 different subunits, 5 of which are encoded in the nucleus.

Its subcellular location is the plastid. It is found in the chloroplast thylakoid membrane. The catalysed reaction is a plastoquinone + NADH + (n+1) H(+)(in) = a plastoquinol + NAD(+) + n H(+)(out). The enzyme catalyses a plastoquinone + NADPH + (n+1) H(+)(in) = a plastoquinol + NADP(+) + n H(+)(out). Functionally, NDH shuttles electrons from NAD(P)H:plastoquinone, via FMN and iron-sulfur (Fe-S) centers, to quinones in the photosynthetic chain and possibly in a chloroplast respiratory chain. The immediate electron acceptor for the enzyme in this species is believed to be plastoquinone. Couples the redox reaction to proton translocation, and thus conserves the redox energy in a proton gradient. This Amborella trichopoda protein is NAD(P)H-quinone oxidoreductase subunit 4L, chloroplastic.